A 374-amino-acid chain; its full sequence is MPEVSNGRRPSVATFLRQFASTIIPLVNVKQSMPTTQINIVLAEPRCMAGEFFNAKVLLDSSDPDTVVHSFCAEIKGIGRTGWVNIHTDKIFETEKTYIDTQVQLCDSGTCLPVGKHQFPVQIRIPLNCPSSYESQFGSIRYQMKVELRASTDQASCSEVFPLVILTRSFFDDVPLNAMSPIDFKDEVDFTCCTLPFGCVSLNMSLTRTAFRIGESIEAVVTINNRTRKGLKEVALQLIMKTQFEARSRYEHVNEKKLAEQLIEMVPLGAVKSRCRMEFEKCLLRIPDAAPPTQNYNRGAGESSIIAIHYVLKLTALPGIECEIPLIVTSCGYMDPHKQAAFQHHLNRSKAKVSKTEQQQRKTRNIVEENPYFR.

The disordered stretch occupies residues His344–Arg374.

Belongs to the arrestin family.

The sequence is that of Arrestin domain-containing protein 15 (arrd-15) from Caenorhabditis elegans.